The chain runs to 71 residues: Protein DP71L (71 aa).

2 important for host CHOP inhibition regions span residues 16–18 (VRF) and 57–61 (LSAVL).

It belongs to the asfivirus DP71L family. Interacts (via C-terminus) with host PPP1CB.

In terms of biological role, interacts with the host phosphatase PP1 catalytic subunit (PPP1CB) and recruits it to dephosphorylate EIF2S1/eIF2alpha and therefore restores the host translation that has been shut-down by the host. Also inhibits the EIF2S1/eIF2alpha-ATF4-DDIT3/CHOP pathway. The chain is Protein DP71L from Ornithodoros (relapsing fever ticks).